The chain runs to 179 residues: Adaptation to cold protein A (179 aa).

Residues 133–179 are disordered; it reads KATPAPKRSADDDFEDEDSDYADYSDDDDDEGEEEDGYYDHYDDEDR. Residues 144–179 are compositionally biased toward acidic residues; the sequence is DDFEDEDSDYADYSDDDDDEGEEEDGYYDHYDDEDR.

Its function is as follows. Part of an operon involved in cold adaptation. The polypeptide is Adaptation to cold protein A (Shewanella oneidensis (strain ATCC 700550 / JCM 31522 / CIP 106686 / LMG 19005 / NCIMB 14063 / MR-1)).